The following is a 467-amino-acid chain: Probable endopeptidase p60 (467 aa).

Residues 1–27 (MNMKKATIAATAGIAVTAFAAPTIASA) form the signal peptide. A LysM 1 domain is found at 28 to 71 (STVVVEAGDTLWGIAQSKGTTVDAIKKANNLTTDKIVPGQKLQV). The SH3b domain occupies 79-143 (KAEKSVSATW…VNGKYLTDKA (65 aa)). Disordered stretches follow at residues 154-199 (KKET…QNAT) and 247-348 (KTVA…GSTN). The span at 172–185 (KQPTTQQTAPAPKA) shows a compositional bias: low complexity. The LysM 2 domain maps to 199–242 (TTHNVKSGDTIWALSVKYGVSVQDIMSWNNLSSSSIYVGQKLAI). Over residues 288–348 (TEQQTTTKAP…NTNTNQGSTN (61 aa)) the composition is skewed to low complexity. The interval 330–343 (TNTNTNTNTNTNTN) is 7 X 2 AA tandem repeats of T-N. The 119-residue stretch at 349–467 (NASASALIAE…GKFLVGFGRV (119 aa)) folds into the NlpC/P60 domain. Catalysis depends on Cys379, which acts as the Nucleophile. Catalysis depends on His429, which acts as the Proton acceptor. Residue Asn441 is part of the active site.

The protein belongs to the peptidase C40 family.

This major extracellular protein may be involved in the invasion of non-professional phagocytic cells by Listeria. The chain is Probable endopeptidase p60 (iap) from Listeria innocua serovar 6a (strain ATCC BAA-680 / CLIP 11262).